The primary structure comprises 154 residues: Jupiter microtubule associated homolog 1 (154 aa).

Methionine 1 carries the N-acetylmethionine modification. The segment covering 1–19 has biased composition (polar residues); that stretch reads MTTTTTFKGVDPNSRNSSR. Positions 1-154 are disordered; sequence MTTTTTFKGV…PGGKSSLVLG (154 aa). The residue at position 2 (threonine 2) is an N-acetylthreonine; in Hematological and neurological expressed 1 protein, N-terminally processed. A phosphoserine mark is found at serine 28 and serine 31. A compositionally biased stretch (polar residues) spans 47–59; it reads MASNIFGTPEENQ. Threonine 54 carries the post-translational modification Phosphothreonine. The span at 60–71 shows a compositional bias: low complexity; sequence ASWAKSAGAKSS. 5 positions are modified to phosphoserine: serine 71, serine 80, serine 87, serine 88, and serine 92. Polar residues predominate over residues 80 to 91; sequence SGLQRRNSSEAS. Residues 96 to 108 show a composition bias toward basic and acidic residues; the sequence is LDLKGEGDIHENV. Positions 125–138 are enriched in pro residues; the sequence is PAAPVPSPVAPAPV. Serine 131 carries the phosphoserine modification. The residue at position 148 (lysine 148) is an N6-acetyllysine.

This sequence belongs to the JUPITER family. Interacts with the complex composed, at least, of APC, CTNNB1 and GSK3B; the interaction takes place with the inactive form of GSK3B (phosphorylated at 'Ser-9'). Expressed in testis, skeletal muscle, thymus, prostate, colon, peripheral blood cells, brain and placenta.

It localises to the nucleus. It is found in the cytoplasm. In terms of biological role, modulates negatively AKT-mediated GSK3B signaling. Induces CTNNB1 'Ser-33' phosphorylation and degradation through the suppression of the inhibitory 'Ser-9' phosphorylation of GSK3B, which represses the function of the APC:CTNNB1:GSK3B complex and the interaction with CDH1/E-cadherin in adherent junctions. Plays a role in the regulation of cell cycle and cell adhesion. Has an inhibitory role on AR-signaling pathway through the induction of receptor proteasomal degradation. The chain is Jupiter microtubule associated homolog 1 from Homo sapiens (Human).